Reading from the N-terminus, the 457-residue chain is Proton extrusion protein PxcA (457 aa).

The next 4 membrane-spanning stretches (helical) occupy residues 239 to 259 (FILLLIIVPLLTHQLTKTFFL), 332 to 352 (INAISNVFADIFSLIAFGVVI), 368 to 390 (GILYSLSDSAKAFLIILFTDMFV), and 417 to 437 (FNFLFIATFPVILDTVLKYWI).

This sequence belongs to the CemA family.

It localises to the cell inner membrane. Its function is as follows. Required for H(+) efflux immediately after light irradiation to form a rapid H(+) concentration gradient across the thylakoid membranes. Together with PxcL, contributes to transient H(+) uptake following dark to light transition. The protein is Proton extrusion protein PxcA of Gloeothece citriformis (strain PCC 7424) (Cyanothece sp. (strain PCC 7424)).